The chain runs to 246 residues: 3-deoxy-manno-octulosonate cytidylyltransferase (246 aa).

Belongs to the KdsB family.

It localises to the cytoplasm. The catalysed reaction is 3-deoxy-alpha-D-manno-oct-2-ulosonate + CTP = CMP-3-deoxy-beta-D-manno-octulosonate + diphosphate. It participates in nucleotide-sugar biosynthesis; CMP-3-deoxy-D-manno-octulosonate biosynthesis; CMP-3-deoxy-D-manno-octulosonate from 3-deoxy-D-manno-octulosonate and CTP: step 1/1. It functions in the pathway bacterial outer membrane biogenesis; lipopolysaccharide biosynthesis. Functionally, activates KDO (a required 8-carbon sugar) for incorporation into bacterial lipopolysaccharide in Gram-negative bacteria. The polypeptide is 3-deoxy-manno-octulosonate cytidylyltransferase (Rickettsia africae (strain ESF-5)).